The sequence spans 392 residues: Phosphopentomutase (392 aa).

Mn(2+)-binding residues include Asp15, Asp287, His292, Asp328, His329, and His340.

The protein belongs to the phosphopentomutase family. Requires Mn(2+) as cofactor.

The protein resides in the cytoplasm. The catalysed reaction is 2-deoxy-alpha-D-ribose 1-phosphate = 2-deoxy-D-ribose 5-phosphate. The enzyme catalyses alpha-D-ribose 1-phosphate = D-ribose 5-phosphate. It participates in carbohydrate degradation; 2-deoxy-D-ribose 1-phosphate degradation; D-glyceraldehyde 3-phosphate and acetaldehyde from 2-deoxy-alpha-D-ribose 1-phosphate: step 1/2. Its function is as follows. Isomerase that catalyzes the conversion of deoxy-ribose 1-phosphate (dRib-1-P) and ribose 1-phosphate (Rib-1-P) to deoxy-ribose 5-phosphate (dRib-5-P) and ribose 5-phosphate (Rib-5-P), respectively. This is Phosphopentomutase from Syntrophotalea carbinolica (strain DSM 2380 / NBRC 103641 / GraBd1) (Pelobacter carbinolicus).